The sequence spans 1111 residues: ATP-dependent DNA helicase mph1 (1111 aa).

Acidic residues-rich tracts occupy residues 1-18 (MSVS…EIDD) and 47-65 (VFDE…DEFQ). Disordered regions lie at residues 1-81 (MSVS…EDVE), 101-144 (FVTQ…HQPD), 210-240 (AFDS…RTNR), and 259-280 (IPSQ…PTHH). 2 stretches are compositionally biased toward polar residues: residues 132–143 (PTTTTVDASHQP) and 215–238 (LSLS…QFRT). The region spanning 306-474 (IAQRGLFHNL…AVIDGLGIAK (169 aa)) is the Helicase ATP-binding domain. Position 319–326 (319–326 (LPTGLGKT)) interacts with ATP. The DEAH box motif lies at 422–425 (DEAH). A Helicase C-terminal domain is found at 644–818 (YLKQVVLNHF…GTRFTFHDDT (175 aa)). Disordered stretches follow at residues 836-898 (IDIP…RKPT), 998-1047 (SVLS…CTPE), and 1092-1111 (AERH…DTEE). Residues 852-864 (KRARPPKRPPKKF) show a composition bias toward basic residues.

Belongs to the DEAD box helicase family. DEAH subfamily. FANCM sub-subfamily. As to quaternary structure, interacts with the MHF histone-fold complex to form the FANCM-MHF complex.

It localises to the nucleus. The enzyme catalyses ATP + H2O = ADP + phosphate + H(+). Its function is as follows. ATP-dependent DNA helicase involved in DNA damage repair by homologous recombination and in genome maintenance. Capable of unwinding D-loops. Plays a role in limiting crossover recombinants during mitotic DNA double-strand break (DSB) repair. Component of a FANCM-MHF complex which promotes gene conversion at blocked replication forks, probably by reversal of the stalled fork. The sequence is that of ATP-dependent DNA helicase mph1 from Neosartorya fischeri (strain ATCC 1020 / DSM 3700 / CBS 544.65 / FGSC A1164 / JCM 1740 / NRRL 181 / WB 181) (Aspergillus fischerianus).